We begin with the raw amino-acid sequence, 226 residues long: V-type proton ATPase subunit E 2 (226 aa).

Belongs to the V-ATPase E subunit family. As to quaternary structure, V-ATPase is a heteromultimeric enzyme made up of two complexes: the ATP-hydrolytic V1 complex and the proton translocation V0 complex. The V1 complex consists of three catalytic AB heterodimers that form a heterohexamer, three peripheral stalks each consisting of EG heterodimers, one central rotor including subunits D and F, and the regulatory subunits C and H. The proton translocation complex V0 consists of the proton transport subunit a, a ring of proteolipid subunits c9c'', rotary subunit d, subunits e and f, and the accessory subunits ATP6AP1/Ac45 and ATP6AP2/PRR. In terms of tissue distribution, testis specific.

In terms of biological role, subunit of the V1 complex of vacuolar(H+)-ATPase (V-ATPase), a multisubunit enzyme composed of a peripheral complex (V1) that hydrolyzes ATP and a membrane integral complex (V0) that translocates protons. V-ATPase is responsible for acidifying and maintaining the pH of intracellular compartments and in some cell types, is targeted to the plasma membrane, where it is responsible for acidifying the extracellular environment. The chain is V-type proton ATPase subunit E 2 (ATP6V1E2) from Homo sapiens (Human).